We begin with the raw amino-acid sequence, 129 residues long: Small ribosomal subunit protein uS11 (129 aa).

This sequence belongs to the universal ribosomal protein uS11 family. Part of the 30S ribosomal subunit. Interacts with proteins S7 and S18. Binds to IF-3.

Functionally, located on the platform of the 30S subunit, it bridges several disparate RNA helices of the 16S rRNA. Forms part of the Shine-Dalgarno cleft in the 70S ribosome. This chain is Small ribosomal subunit protein uS11, found in Tolumonas auensis (strain DSM 9187 / NBRC 110442 / TA 4).